Consider the following 429-residue polypeptide: UPF0761 membrane protein ABO_1543 (429 aa).

The next 6 helical transmembrane spans lie at 45–65 (LFAIVPVMTVSFVVLSSVPAL), 102–122 (LTVLGIVFLVVTSVLMLSTVE), 141–161 (LLMYWALLSLGPICLGLGLAI), 184–204 (WLAVLPFLFTTAMLTLMYTVV), 216–236 (LGAAMAALLFELAKGAFTFFI), and 256–278 (LLWIYISWTIVLGGAELVRALVV).

It belongs to the UPF0761 family.

It localises to the cell inner membrane. The sequence is that of UPF0761 membrane protein ABO_1543 from Alcanivorax borkumensis (strain ATCC 700651 / DSM 11573 / NCIMB 13689 / SK2).